We begin with the raw amino-acid sequence, 183 residues long: Oligoribonuclease (183 aa).

Residues 8–171 enclose the Exonuclease domain; sequence LIWLDLEMTG…QDIRDSIEEL (164 aa). Tyr129 is a catalytic residue.

This sequence belongs to the oligoribonuclease family.

The protein localises to the cytoplasm. 3'-to-5' exoribonuclease specific for small oligoribonucleotides. The sequence is that of Oligoribonuclease from Coxiella burnetii (strain RSA 493 / Nine Mile phase I).